Consider the following 351-residue polypeptide: Ribosomal RNA small subunit methyltransferase H (351 aa).

Residues 48-50, aspartate 67, phenylalanine 94, aspartate 115, and glutamine 122 each bind S-adenosyl-L-methionine; that span reads GGY. The tract at residues 274 to 351 is disordered; sequence AAQASRHVPG…PAPQGRGPRR (78 aa).

It belongs to the methyltransferase superfamily. RsmH family.

The protein resides in the cytoplasm. It carries out the reaction cytidine(1402) in 16S rRNA + S-adenosyl-L-methionine = N(4)-methylcytidine(1402) in 16S rRNA + S-adenosyl-L-homocysteine + H(+). Functionally, specifically methylates the N4 position of cytidine in position 1402 (C1402) of 16S rRNA. The chain is Ribosomal RNA small subunit methyltransferase H from Methylorubrum extorquens (strain PA1) (Methylobacterium extorquens).